A 392-amino-acid chain; its full sequence is D-amino-acid oxidase 2 (392 aa).

FAD contacts are provided by serine 10, isoleucine 13, arginine 33, aspartate 34, alanine 45, serine 46, glycine 50, and asparagine 52. 4 residues coordinate anthranilate: phenylalanine 56, tyrosine 245, tyrosine 262, and arginine 311. Tyrosine 245, tyrosine 262, and arginine 311 together coordinate (R)-lactate. Residues arginine 311, glycine 361, serine 362, glycine 364, and glutamine 366 each coordinate FAD. Serine 362 is a binding site for anthranilate. Residue serine 362 coordinates (R)-lactate. The Microbody targeting signal motif lies at 390–392 (AKL).

It belongs to the DAMOX/DASOX family. The cofactor is FAD.

The protein resides in the peroxisome matrix. It carries out the reaction a D-alpha-amino acid + O2 + H2O = a 2-oxocarboxylate + H2O2 + NH4(+). It catalyses the reaction D-methionine + O2 + H2O = 4-methylsulfanyl-2-oxobutanoate + H2O2 + NH4(+). The catalysed reaction is D-serine + O2 + H2O = 3-hydroxypyruvate + H2O2 + NH4(+). The enzyme catalyses D-histidine + O2 + H2O = 3-(imidazol-5-yl)pyruvate + H2O2 + NH4(+). It carries out the reaction D-proline + O2 = 1-pyrroline-2-carboxylate + H2O2. It catalyses the reaction D-alanine + O2 + H2O = pyruvate + H2O2 + NH4(+). The catalysed reaction is D-leucine + O2 + H2O = 4-methyl-2-oxopentanoate + H2O2 + NH4(+). The enzyme catalyses D-valine + O2 + H2O = 3-methyl-2-oxobutanoate + H2O2 + NH4(+). Catalyzes the oxidative deamination of D-amino acids with broad substrate specificity. Enables the organism to utilize D-amino acids as a source of nutrients. Enables the organism to utilize D-alanine, D-cysteine, D-histidine, D-leucine, D-methionine, D-phenylalanine, D-proline, D-serine, D-threonine, D-aspartate and D-valine as a nitrogen source and may also contribute to utlization of D-tryptophan, D-tyrosine and D-asparagine as a nitrogen source. Protects the organism from the toxicity of D-amino acids, including from D-alanine. May play a role in its interaction with the host. The protein is D-amino-acid oxidase 2 of Cryptococcus deuterogattii (strain R265) (Cryptococcus gattii VGII (strain R265)).